The chain runs to 175 residues: MQNTKLLLTSFTFVGLLALAGCSFPGVYKIDIQQGNVVTQDMIDQLRPGMTRRQVRFIMGNALLTDTFHADRWDYLYSLQPGGGERQQERVSVIFNGNDQLVSLSGDFMPGVSRDEALLGKDSGTNVTAPAQEAEKPKSEVPAKPGSLLDTIQKDIDNVETVPVPTPEPLDTSPQ.

The first 21 residues, Met1–Gly21, serve as a signal peptide directing secretion. A lipid anchor (N-palmitoyl cysteine) is attached at Cys22. A lipid anchor (S-diacylglycerol cysteine) is attached at Cys22. 2 disordered regions span residues Ala117–Ser147 and Ile156–Gln175.

It belongs to the BamE family. Part of the Bam complex.

The protein resides in the cell outer membrane. Functionally, part of the outer membrane protein assembly complex, which is involved in assembly and insertion of beta-barrel proteins into the outer membrane. May have a structural role in maintaining the cell envelope integrity. This Pseudomonas fluorescens protein is Outer membrane protein assembly factor BamE.